We begin with the raw amino-acid sequence, 1034 residues long: Potassium-transporting ATPase alpha chain 1 (1034 aa).

At 1 to 97 (MGKAENYELY…NALRPPRGTP (97 aa)) the chain is on the cytoplasmic side. Phosphotyrosine is present on residues Tyr-7 and Tyr-10. The disordered stretch occupies residues 14-41 (LGSGPGGDMTAKMSKKKAGGGGGKKKEK). Residues 26 to 39 (MSKKKAGGGGGKKK) show a composition bias toward basic residues. Ser-27 carries the post-translational modification Phosphoserine. The helical transmembrane segment at 98 to 118 (EYVKFARQLAGGLQCLMWVAA) threads the bilayer. Residues 119–141 (AICLIAFAIQASEGDLTTDDNLY) are Lumenal-facing. A helical transmembrane segment spans residues 142 to 162 (LAVALIAVVVVTGCFGYYQEF). The Cytoplasmic segment spans residues 163–298 (KSTNIIASFK…NEKTPIAIEI (136 aa)). A helical membrane pass occupies residues 299-318 (EHFVDIIAGLAILFGATFFV). At 319–330 (VAMCIGYTFLRA) the chain is on the lumenal side. A helical membrane pass occupies residues 331–348 (MVFFMAIVVAYVPEGLLA). K(+) contacts are provided by Val-339, Ala-340, Val-342, and Glu-344. Residues 349-782 (TVTVCLSLTA…EQGRLIFDNL (434 aa)) are Cytoplasmic-facing. Catalysis depends on Asp-386, which acts as the 4-aspartylphosphate intermediate. Residues Asp-386 and Thr-388 each coordinate Mg(2+). Residues Ser-462 and Ser-600 each carry the phosphoserine modification. Mg(2+) is bound by residues Asp-727 and Asp-731. The chain crosses the membrane as a helical span at residues 783-802 (KKSIAYTLTKNIPELTPYLI). Glu-796 contributes to the K(+) binding site. Residues 803-812 (YITVSVPLPL) are Lumenal-facing. A helical membrane pass occupies residues 813-833 (GCITILFIELCTDIFPSVSLA). Residue Glu-821 coordinates K(+). The Cytoplasmic segment spans residues 834–853 (YEKAESDIMHLRPRNPKRDR). Ser-839 is modified (phosphoserine). Residues 854–876 (LVNEPLAAYSYFQIGAIQSFAGF) traverse the membrane as a helical segment. The Lumenal segment spans residues 877-928 (ADYFTAMAQEGWFPLLCVGLRPQWEDHHLQDLQDSYGQEWTFGQRLYQQYTC). The helical transmembrane segment at 929–948 (YTVFFISIEMCQIADVLIRK) threads the bilayer. At 949–962 (TRRLSVFQQGFFRN) the chain is on the cytoplasmic side. Residue Ser-953 is modified to Phosphoserine; by PKA. A helical membrane pass occupies residues 963–981 (KILVIAIVFQVCIGCFLCY). The Lumenal portion of the chain corresponds to 982–996 (CPGMPNIFNFMPIRF). The helical transmembrane segment at 997-1017 (QWWLVPMPFGLLIFVYDEIRK) threads the bilayer. Over 1018–1034 (LGVRCCPGSWWDQELYY) the chain is Cytoplasmic.

This sequence belongs to the cation transport ATPase (P-type) (TC 3.A.3) family. Type IIC subfamily. The gastric H(+)/K(+) ATPase pump is composed of the catalytic alpha subunit ATP4A and the regulatory beta subunit ATP4B. Interacts (via the P-domain) with ATP4B (via N-terminus); this interaction stabilizes the lumenal-open E2 conformation state and prevents the reverse reaction of the transport cycle. As to expression, expressed in parietal cells (at protein level).

It is found in the apical cell membrane. The catalysed reaction is K(+)(out) + ATP + H2O + H(+)(in) = K(+)(in) + ADP + phosphate + 2 H(+)(out). Functionally, the catalytic subunit of the gastric H(+)/K(+) ATPase pump which transports H(+) ions in exchange for K(+) ions across the apical membrane of parietal cells. Uses ATP as an energy source to pump H(+) ions to the gastric lumen while transporting K(+) ion from the lumen into the cell. Remarkably generates a million-fold proton gradient across the gastric parietal cell membrane, acidifying the gastric juice down to pH 1. Within a transport cycle, the transfer of a H(+) ion across the membrane is coupled to ATP hydrolysis and is associated with a transient phosphorylation that shifts the pump conformation from inward-facing (E1) to outward-facing state (E2). The release of the H(+) ion in the stomach lumen is followed by binding of K(+) ion converting the pump conformation back to the E1 state. This Mus musculus (Mouse) protein is Potassium-transporting ATPase alpha chain 1.